The sequence spans 207 residues: Protein GrpE (207 aa).

The segment at 1-33 (MTDPNGPKDIPEQSAEAAEPVVSKPYIMPDDPE) is disordered.

This sequence belongs to the GrpE family. Homodimer.

It is found in the cytoplasm. In terms of biological role, participates actively in the response to hyperosmotic and heat shock by preventing the aggregation of stress-denatured proteins, in association with DnaK and GrpE. It is the nucleotide exchange factor for DnaK and may function as a thermosensor. Unfolded proteins bind initially to DnaJ; upon interaction with the DnaJ-bound protein, DnaK hydrolyzes its bound ATP, resulting in the formation of a stable complex. GrpE releases ADP from DnaK; ATP binding to DnaK triggers the release of the substrate protein, thus completing the reaction cycle. Several rounds of ATP-dependent interactions between DnaJ, DnaK and GrpE are required for fully efficient folding. This is Protein GrpE from Rhodopseudomonas palustris (strain BisA53).